Consider the following 991-residue polypeptide: Integrator complex subunit 10-like protein (991 aa).

Disordered regions lie at residues 180 to 217, 310 to 345, 462 to 484, 549 to 614, and 961 to 991; these read NNNN…NNNN, YFDE…DIEK, NDYF…SQES, NSSS…GQQP, and EKQY…EMNE. The span at 319–333 shows a compositional bias: low complexity; that stretch reads KQQQQQQQQQQQQEQ. A compositionally biased stretch (acidic residues) spans 473–484; that stretch reads GGDENDENSQES. The span at 549 to 609 shows a compositional bias: low complexity; that stretch reads NSSSGSNGII…NNNNNNNNNN (61 aa). Residues 964 to 991 show a composition bias toward polar residues; sequence YSSSNTANNSGVNNSPIHNQNTDVEMNE.

The protein resides in the nucleus. May be a component of the Integrator complex, a complex involved in the small nuclear RNAs (snRNA) U1 and U2 transcription and in their 3'-box-dependent processing. This Dictyostelium discoideum (Social amoeba) protein is Integrator complex subunit 10-like protein.